Reading from the N-terminus, the 162-residue chain is ATP synthase subunit b (162 aa).

Residues 8-28 (LTGIIQLLNFLILLFVLYKFL) form a helical membrane-spanning segment.

The protein belongs to the ATPase B chain family. As to quaternary structure, F-type ATPases have 2 components, F(1) - the catalytic core - and F(0) - the membrane proton channel. F(1) has five subunits: alpha(3), beta(3), gamma(1), delta(1), epsilon(1). F(0) has three main subunits: a(1), b(2) and c(10-14). The alpha and beta chains form an alternating ring which encloses part of the gamma chain. F(1) is attached to F(0) by a central stalk formed by the gamma and epsilon chains, while a peripheral stalk is formed by the delta and b chains.

It localises to the cell inner membrane. In terms of biological role, f(1)F(0) ATP synthase produces ATP from ADP in the presence of a proton or sodium gradient. F-type ATPases consist of two structural domains, F(1) containing the extramembraneous catalytic core and F(0) containing the membrane proton channel, linked together by a central stalk and a peripheral stalk. During catalysis, ATP synthesis in the catalytic domain of F(1) is coupled via a rotary mechanism of the central stalk subunits to proton translocation. Functionally, component of the F(0) channel, it forms part of the peripheral stalk, linking F(1) to F(0). This Pseudothermotoga lettingae (strain ATCC BAA-301 / DSM 14385 / NBRC 107922 / TMO) (Thermotoga lettingae) protein is ATP synthase subunit b.